Reading from the N-terminus, the 95-residue chain is Selenoprotein K (95 aa).

A helical transmembrane segment spans residues 20-42; it reads LSFLTDMFWGITDFIVMFFQSII. The segment at 48–95 is disordered; that stretch reads RRGCQNSSSRTRFDDGRGPPGNPRRRMGRIDHNSGPNAPPMSGGGUGR. Position 93 (Sec-93) is a non-standard amino acid, selenocysteine.

The protein belongs to the selenoprotein K family.

Its subcellular location is the endoplasmic reticulum membrane. The protein localises to the cell membrane. Functionally, required for Ca(2+) flux in immune cells and plays a role in T-cell proliferation and in T-cell and neutrophil migration. Involved in endoplasmic reticulum-associated degradation (ERAD) of soluble glycosylated proteins. Required for cell surface expression of CD36 and involved in macrophage uptake of low-density lipoprotein and in foam cell formation. Required for palmitoylation. The protein is Selenoprotein K (selenok) of Xenopus tropicalis (Western clawed frog).